A 427-amino-acid chain; its full sequence is Serine--tRNA ligase (427 aa).

Position 235–237 (235–237) interacts with L-serine; that stretch reads TAE. ATP-binding positions include 266–268 and V282; that span reads RRE. E289 is an L-serine binding site. 353 to 356 contributes to the ATP binding site; sequence EASS. S389 is a binding site for L-serine.

The protein belongs to the class-II aminoacyl-tRNA synthetase family. Type-1 seryl-tRNA synthetase subfamily. Homodimer. The tRNA molecule binds across the dimer.

The protein resides in the cytoplasm. It carries out the reaction tRNA(Ser) + L-serine + ATP = L-seryl-tRNA(Ser) + AMP + diphosphate + H(+). It catalyses the reaction tRNA(Sec) + L-serine + ATP = L-seryl-tRNA(Sec) + AMP + diphosphate + H(+). The protein operates within aminoacyl-tRNA biosynthesis; selenocysteinyl-tRNA(Sec) biosynthesis; L-seryl-tRNA(Sec) from L-serine and tRNA(Sec): step 1/1. Catalyzes the attachment of serine to tRNA(Ser). Is also able to aminoacylate tRNA(Sec) with serine, to form the misacylated tRNA L-seryl-tRNA(Sec), which will be further converted into selenocysteinyl-tRNA(Sec). This is Serine--tRNA ligase from Chloroherpeton thalassium (strain ATCC 35110 / GB-78).